A 564-amino-acid chain; its full sequence is Aspyridones efflux protein (564 aa).

Over residues 1-17 the composition is skewed to low complexity; sequence MHPDQADTAAMQQQTTT. Residues 1–49 are disordered; sequence MHPDQADTAAMQQQTTTECSDRSRPEKAEEGHAREHTVTRTCSREPEQT. Over residues 19–47 the composition is skewed to basic and acidic residues; that stretch reads CSDRSRPEKAEEGHAREHTVTRTCSREPE. 10 consecutive transmembrane segments (helical) span residues 66–86, 127–147, 158–178, 185–205, 216–236, 260–280, 287–307, 335–355, 368–388, and 392–412; these read AICL…TAIP, WTFL…ATAP, IAGC…THSV, LFMA…PPLG, WCFW…VFLF, VGTL…QWGG, SGIV…FGIV, FALG…FQGV, LPML…VTII, and APFM…LLLF. An N-linked (GlcNAc...) asparagine glycan is attached at Asn415. The next 2 helical transmembrane spans lie at 416–436 and 454–474; these read VTAA…GFGW and IATA…VSVA. Asn524 carries an N-linked (GlcNAc...) asparagine glycan. Residues 528-548 form a helical membrane-spanning segment; the sequence is LSAFFVATIMAIMSLVGCTFV.

The protein belongs to the major facilitator superfamily. TCR/Tet family.

It localises to the cell membrane. In terms of biological role, efflux pump that may be involved in the secretion of leporins. The polypeptide is Aspyridones efflux protein (TP) (Neocamarosporium betae (Beet black rot fungus)).